The sequence spans 626 residues: ABC transporter G family member 8 (626 aa).

An ABC transporter domain is found at 56-300 (VNLDNKTENS…SLGYPCPNNT (245 aa)). 90-97 (GPSGSGKS) is a binding site for ATP. The ABC transmembrane type-2 domain occupies 373 to 621 (GNALSRVITA…SLSYFALHFL (249 aa)). Transmembrane regions (helical) follow at residues 376 to 396 (LSRV…FAGL), 409 to 429 (TLFF…TLFL), 447 to 467 (FPYF…VTLV), 485 to 505 (FFFA…FISS), 515 to 535 (LTFS…GFYV), 543 to 563 (AFGW…VVIN), and 600 to 620 (FGVL…ALHF).

This sequence belongs to the ABC transporter superfamily. ABCG family. Eye pigment precursor importer (TC 3.A.1.204) subfamily.

The protein localises to the membrane. The protein is ABC transporter G family member 8 (abcG8) of Dictyostelium discoideum (Social amoeba).